We begin with the raw amino-acid sequence, 265 residues long: UPF0354 protein GTNG_2723 (265 aa).

This sequence belongs to the UPF0354 family.

The sequence is that of UPF0354 protein GTNG_2723 from Geobacillus thermodenitrificans (strain NG80-2).